The sequence spans 296 residues: Formamidopyrimidine-DNA glycosylase (296 aa).

The active-site Schiff-base intermediate with DNA is the Pro-2. Glu-3 (proton donor) is an active-site residue. Residue Lys-58 is the Proton donor; for beta-elimination activity of the active site. His-106, Arg-125, and Lys-167 together coordinate DNA. The segment at 258-294 adopts an FPG-type zinc-finger fold; that stretch reads RVYDRVGLPCSRPGCAGAITRIVQANRSTFFCATCQP. Arg-284 serves as the catalytic Proton donor; for delta-elimination activity.

Belongs to the FPG family. As to quaternary structure, monomer. Zn(2+) is required as a cofactor.

The catalysed reaction is Hydrolysis of DNA containing ring-opened 7-methylguanine residues, releasing 2,6-diamino-4-hydroxy-5-(N-methyl)formamidopyrimidine.. The enzyme catalyses 2'-deoxyribonucleotide-(2'-deoxyribose 5'-phosphate)-2'-deoxyribonucleotide-DNA = a 3'-end 2'-deoxyribonucleotide-(2,3-dehydro-2,3-deoxyribose 5'-phosphate)-DNA + a 5'-end 5'-phospho-2'-deoxyribonucleoside-DNA + H(+). In terms of biological role, involved in base excision repair of DNA damaged by oxidation or by mutagenic agents. Acts as a DNA glycosylase that recognizes and removes damaged bases. Has a preference for oxidized purines, such as 7,8-dihydro-8-oxoguanine (8-oxoG). Has AP (apurinic/apyrimidinic) lyase activity and introduces nicks in the DNA strand. Cleaves the DNA backbone by beta-delta elimination to generate a single-strand break at the site of the removed base with both 3'- and 5'-phosphates. This is Formamidopyrimidine-DNA glycosylase from Methylobacterium radiotolerans (strain ATCC 27329 / DSM 1819 / JCM 2831 / NBRC 15690 / NCIMB 10815 / 0-1).